The chain runs to 122 residues: ATP synthase epsilon chain (122 aa).

Belongs to the ATPase epsilon chain family. In terms of assembly, F-type ATPases have 2 components, CF(1) - the catalytic core - and CF(0) - the membrane proton channel. CF(1) has five subunits: alpha(3), beta(3), gamma(1), delta(1), epsilon(1). CF(0) has three main subunits: a, b and c.

The protein localises to the cell membrane. Functionally, produces ATP from ADP in the presence of a proton gradient across the membrane. This chain is ATP synthase epsilon chain, found in Rhodococcus opacus (strain B4).